Here is a 312-residue protein sequence, read N- to C-terminus: MGEGGYRQINKTLNVCAFDDYLVTQQSRLPKLLDIEQLSPRVLRVLGQNAGKFTLQGTNTYIVGTGQHRLIIDTAQGYREWADLIDVTLSNRSISLSHVFLTHWHGDHTGGVPDLIRMYPHLADGIYKNSPEQGQHPIEEGQIFKVEGATIRAVHGPGHSHDHMCFVLEEENAMFTGDNVLGHGTSAVEQLGLYMDTLRKLQAQGCRTGYPAHGAVIPDLNLKIATELAQKTRREKQCLAALGRIRKERPTGQLASVTVGELIDVVHGTRVNEEVRKMALEPFMEEVLRKLAEDGKVAFRVRKGVKTWFALT.

Zn(2+) contacts are provided by H103, H105, D107, and H108. Catalysis depends on D107, which acts as the Proton donor/acceptor.

Belongs to the metallo-beta-lactamase superfamily. It depends on Zn(2+) as a cofactor.

It carries out the reaction atrochrysone carboxyl-[ACP] + H2O = atrochrysone carboxylate + holo-[ACP] + H(+). It functions in the pathway secondary metabolite biosynthesis. In terms of biological role, atrochrysone carboxyl ACP thioesterase; part of the gene cluster that mediates the biosynthesis of the tetrahydroxanthone dimer secalonic acid D. The pathway begins with the synthesis of atrochrysone thioester by the polyketide synthase AacuL. The atrochrysone carboxyl ACP thioesterase AacuM then breaks the thioester bond and releases the atrochrysone carboxylic acid from AacuL. Atrochrysone carboxylic acid is decarboxylated by the decarboxylase AacuI, and oxidized by the anthrone oxygenase AacuG to yield emodin. Emodin is then reduced to emodin hydroquinone by a yet unidentified oxidoreductase. A-ring reduction by the short chain dehydrogenase AacuN, dehydration by the scytalone dehydratase-like protein AacuK and probable spontaneous re-oxidation, results in overall deoxygenation to chrysophanol. Baeyer-Villiger oxidation by the Baeyer-Villiger monooxygenase (BVMO) AacuH then yields monodictyphenone. Monodictyphenone is transformed into compounds with the tetrahydroxanthone skeleton via methylesterification by the methyltransferase AacuQ, followed by the action of the flavin-dependent monooxygenase AacuC, the isomerase AacuP, and the short chain dehydrogenase/reductase AacuF or AacuD. AacuF and AacuD should accept the same compound as a substrate but perform the ketoreduction with a different stereoselectivity, thus yielding blennolides B and A, respectively. In the final step of the biosynthesis, the cytochrome P450 monooxygenase AacuE accepts blennolide B and/or blennolide A to conduct the dimerization reaction to furnish the tetrahydroxanthone dimers, secalonic acids D, B, and F. This Aspergillus aculeatus (strain ATCC 16872 / CBS 172.66 / WB 5094) protein is Atrochrysone carboxyl ACP thioesterase AacuM.